We begin with the raw amino-acid sequence, 167 residues long: Phosphopantetheine adenylyltransferase (167 aa).

Residue Thr-10 participates in substrate binding. ATP contacts are provided by residues 10-11 (TF) and His-18. Substrate-binding residues include Ala-77 and Arg-91. Residues 92–94 (GLR), Glu-102, and 127–133 (YSFISSS) contribute to the ATP site.

It belongs to the bacterial CoaD family. As to quaternary structure, homohexamer. Mg(2+) is required as a cofactor.

The protein resides in the cytoplasm. It carries out the reaction (R)-4'-phosphopantetheine + ATP + H(+) = 3'-dephospho-CoA + diphosphate. It participates in cofactor biosynthesis; coenzyme A biosynthesis; CoA from (R)-pantothenate: step 4/5. Its function is as follows. Reversibly transfers an adenylyl group from ATP to 4'-phosphopantetheine, yielding dephospho-CoA (dPCoA) and pyrophosphate. In Thermomicrobium roseum (strain ATCC 27502 / DSM 5159 / P-2), this protein is Phosphopantetheine adenylyltransferase.